A 387-amino-acid chain; its full sequence is Phosphoglycerate kinase (387 aa).

Residues 21-23 (DLN), arginine 36, 59-62 (HLGR), arginine 113, and arginine 146 each bind substrate. Residues lysine 197, glutamate 314, and 340 to 343 (GGDT) contribute to the ATP site.

Belongs to the phosphoglycerate kinase family. In terms of assembly, monomer.

It localises to the cytoplasm. The catalysed reaction is (2R)-3-phosphoglycerate + ATP = (2R)-3-phospho-glyceroyl phosphate + ADP. It functions in the pathway carbohydrate degradation; glycolysis; pyruvate from D-glyceraldehyde 3-phosphate: step 2/5. This is Phosphoglycerate kinase from Pectobacterium carotovorum subsp. carotovorum (strain PC1).